The chain runs to 200 residues: TATA-box-binding protein (200 aa).

2 consecutive repeat copies span residues 25 to 101 and 115 to 192.

It belongs to the TBP family. In terms of assembly, belongs to the TFIID complex together with the TBP-associated factors (TAFs). Binds DNA as monomer.

The protein resides in the nucleus. Functionally, general transcription factor that functions at the core of the DNA-binding multiprotein factor TFIID. Binding of TFIID to the TATA box is the initial transcriptional step of the pre-initiation complex (PIC), playing a role in the activation of eukaryotic genes transcribed by RNA polymerase II. The sequence is that of TATA-box-binding protein from Mesembryanthemum crystallinum (Common ice plant).